The chain runs to 100 residues: MASHIICYIFCIIKLSCAHVCLMSFGSSYRVGVHITHEKVAACPRQNQRLYSCDSLRILYHYSCLTTRDLLYICDCSDFENIICLIRLLLNLDFVEVKLV.

Residues 1-18 form the signal peptide; that stretch reads MASHIICYIFCIIKLSCA. 3 disulfide bridges follow: cysteine 21–cysteine 84, cysteine 43–cysteine 64, and cysteine 53–cysteine 76.

Belongs to the DEFL family.

It localises to the secreted. In Arabidopsis thaliana (Mouse-ear cress), this protein is Defensin-like protein 316.